Here is a 138-residue protein sequence, read N- to C-terminus: MNTETKSLPAWLDKVRWDDNGLVPVIAQEASTNDVLMFAWMNREALAKTIETQRAVYYSRSRKRLWFKGEESGHVQHVHEVRLDCDEDVVLLKVEQVSGIACHTGRHSCFFQKFEGTVDGGDWVAVEPVLKDPEHIYK.

Asp84 contributes to the Mg(2+) binding site. Cys85 lines the Zn(2+) pocket. The Mg(2+) site is built by Asp86 and Asp88. Residues Cys102 and Cys109 each contribute to the Zn(2+) site.

The protein belongs to the PRA-CH family. In terms of assembly, homodimer. The cofactor is Mg(2+). Zn(2+) serves as cofactor.

The protein localises to the cytoplasm. It catalyses the reaction 1-(5-phospho-beta-D-ribosyl)-5'-AMP + H2O = 1-(5-phospho-beta-D-ribosyl)-5-[(5-phospho-beta-D-ribosylamino)methylideneamino]imidazole-4-carboxamide. It participates in amino-acid biosynthesis; L-histidine biosynthesis; L-histidine from 5-phospho-alpha-D-ribose 1-diphosphate: step 3/9. Functionally, catalyzes the hydrolysis of the adenine ring of phosphoribosyl-AMP. The chain is Phosphoribosyl-AMP cyclohydrolase from Burkholderia orbicola (strain MC0-3).